We begin with the raw amino-acid sequence, 317 residues long: Protein-L-isoaspartate O-methyltransferase (317 aa).

The active site involves S59.

Belongs to the methyltransferase superfamily. L-isoaspartyl/D-aspartyl protein methyltransferase family. In terms of assembly, monomer.

The protein localises to the cytoplasm. The catalysed reaction is [protein]-L-isoaspartate + S-adenosyl-L-methionine = [protein]-L-isoaspartate alpha-methyl ester + S-adenosyl-L-homocysteine. Catalyzes the methyl esterification of L-isoaspartyl residues in peptides and proteins that result from spontaneous decomposition of normal L-aspartyl and L-asparaginyl residues. It plays a role in the repair and/or degradation of damaged proteins. This Thermotoga maritima (strain ATCC 43589 / DSM 3109 / JCM 10099 / NBRC 100826 / MSB8) protein is Protein-L-isoaspartate O-methyltransferase (pcm).